The following is a 197-amino-acid chain: Imidazoleglycerol-phosphate dehydratase (197 aa).

This sequence belongs to the imidazoleglycerol-phosphate dehydratase family.

The protein resides in the cytoplasm. The enzyme catalyses D-erythro-1-(imidazol-4-yl)glycerol 3-phosphate = 3-(imidazol-4-yl)-2-oxopropyl phosphate + H2O. It participates in amino-acid biosynthesis; L-histidine biosynthesis; L-histidine from 5-phospho-alpha-D-ribose 1-diphosphate: step 6/9. This is Imidazoleglycerol-phosphate dehydratase from Clostridium acetobutylicum (strain ATCC 824 / DSM 792 / JCM 1419 / IAM 19013 / LMG 5710 / NBRC 13948 / NRRL B-527 / VKM B-1787 / 2291 / W).